A 443-amino-acid polypeptide reads, in one-letter code: 3-isopropylmalate dehydratase large subunit (443 aa).

[4Fe-4S] cluster contacts are provided by cysteine 347, cysteine 407, and cysteine 410.

It belongs to the aconitase/IPM isomerase family. LeuC type 1 subfamily. In terms of assembly, heterodimer of LeuC and LeuD. It depends on [4Fe-4S] cluster as a cofactor.

It carries out the reaction (2R,3S)-3-isopropylmalate = (2S)-2-isopropylmalate. The protein operates within amino-acid biosynthesis; L-leucine biosynthesis; L-leucine from 3-methyl-2-oxobutanoate: step 2/4. Functionally, catalyzes the isomerization between 2-isopropylmalate and 3-isopropylmalate, via the formation of 2-isopropylmaleate. The protein is 3-isopropylmalate dehydratase large subunit of Buchnera aphidicola subsp. Uroleucon sonchi.